A 712-amino-acid polypeptide reads, in one-letter code: Protein SDA1 homolog (712 aa).

A Phosphothreonine modification is found at Thr-234. Ser-236 bears the Phosphoserine mark. 2 disordered regions span residues 488 to 573 (TIDI…DMRI) and 662 to 712 (VNEH…KKMK). Composition is skewed to acidic residues over residues 491 to 501 (IESEDDTDSND) and 516 to 559 (GADD…ESGE). The segment covering 560-572 (ESAKAKKEKKDMR) has biased composition (basic and acidic residues). Composition is skewed to basic residues over residues 671 to 692 (REKR…KVKK) and 700 to 712 (ALRK…KKMK).

The protein belongs to the SDA1 family.

It localises to the nucleus. The protein resides in the nucleolus. Its function is as follows. Required for 60S pre-ribosomal subunits export to the cytoplasm. The chain is Protein SDA1 homolog (Mys45A) from Drosophila melanogaster (Fruit fly).